The primary structure comprises 475 residues: Aspartate ammonia-lyase (475 aa).

Residues Thr-104, Ser-143, Thr-144, Asn-145, Thr-190, and His-191 each coordinate L-aspartate. Positions 320–329 are SS loop; it reads GSSIMPGKVN. Ser-321 serves as the catalytic Proton acceptor. L-aspartate-binding residues include Ser-322 and Lys-327.

Belongs to the class-II fumarase/aspartase family. Aspartase subfamily. Homotetramer.

The enzyme catalyses L-aspartate = fumarate + NH4(+). Functionally, catalyzes the reversible conversion of L-aspartate to fumarate and ammonia. This is Aspartate ammonia-lyase from Bacillus subtilis (strain 168).